The chain runs to 166 residues: EEF1A lysine methyltransferase 1 (166 aa).

It belongs to the class I-like SAM-binding methyltransferase superfamily. EFM5 family.

It localises to the cytoplasm. It carries out the reaction L-lysyl-[protein] + 3 S-adenosyl-L-methionine = N(6),N(6),N(6)-trimethyl-L-lysyl-[protein] + 3 S-adenosyl-L-homocysteine + 3 H(+). In terms of biological role, protein-lysine methyltransferase that selectively catalyzes the trimethylation of EEF1A at 'Lys-79'. This is EEF1A lysine methyltransferase 1 from Danio rerio (Zebrafish).